The chain runs to 366 residues: Chorismate synthase (366 aa).

2 residues coordinate NADP(+): Arg-48 and Arg-54. Residues 125–127 (RSS), 238–239 (NA), Gly-278, 293–297 (KPTSS), and Arg-319 contribute to the FMN site.

It belongs to the chorismate synthase family. In terms of assembly, homotetramer. It depends on FMNH2 as a cofactor.

It catalyses the reaction 5-O-(1-carboxyvinyl)-3-phosphoshikimate = chorismate + phosphate. Its pathway is metabolic intermediate biosynthesis; chorismate biosynthesis; chorismate from D-erythrose 4-phosphate and phosphoenolpyruvate: step 7/7. Its function is as follows. Catalyzes the anti-1,4-elimination of the C-3 phosphate and the C-6 proR hydrogen from 5-enolpyruvylshikimate-3-phosphate (EPSP) to yield chorismate, which is the branch point compound that serves as the starting substrate for the three terminal pathways of aromatic amino acid biosynthesis. This reaction introduces a second double bond into the aromatic ring system. The sequence is that of Chorismate synthase from Neisseria gonorrhoeae (strain NCCP11945).